A 155-amino-acid chain; its full sequence is MPIKLNASFSDSYVDVSQYRDQHFKGNRYEQEKLLKQSNTLYVGNLSFYTTEEQVYELFSKSGDVKRIIIGLDKVKKTACGFCFVEYYTRADAENAMRFVNGTRLDDRIIRTDWDAGFKEGRQYGRGKSGGQVRDEYRQDYDPARGGYGKVVARP.

MRNA is bound by residues Tyr-19, Tyr-42, 111 to 115 (RTDWD), 122 to 126 (RQYGR), and 132 to 133 (QV). Positions 39 to 117 (NTLYVGNLSF…RIIRTDWDAG (79 aa)) constitute an RRM domain. The interval 122–155 (RQYGRGKSGGQVRDEYRQDYDPARGGYGKVVARP) is disordered. Over residues 133–143 (VRDEYRQDYDP) the composition is skewed to basic and acidic residues.

Belongs to the RRM NCBP2 family. Component of the nuclear cap-binding complex (CBC), a heterodimer composed of ncbp1/cbp80 and ncbp2/cbp20 that interacts with m7GpppG-capped RNA.

Its subcellular location is the nucleus. The protein localises to the cytoplasm. In terms of biological role, component of the cap-binding complex (CBC), which binds co-transcriptionally to the 5' cap of pre-mRNAs and is involved in various processes such as pre-mRNA splicing, translation regulation, nonsense-mediated mRNA decay, RNA-mediated gene silencing (RNAi) by microRNAs (miRNAs) and mRNA export. The CBC complex is involved in mRNA export from the nucleus, leading to the recruitment of the mRNA export machinery to the 5' end of mRNA and to mRNA export in a 5' to 3' direction through the nuclear pore. The CBC complex is also involved in mediating U snRNA and intronless mRNAs export from the nucleus. The CBC complex is essential for a pioneer round of mRNA translation, before steady state translation when the CBC complex is replaced by cytoplasmic cap-binding protein eIF4E. The pioneer round of mRNA translation mediated by the CBC complex plays a central role in nonsense-mediated mRNA decay (NMD), NMD only taking place in mRNAs bound to the CBC complex, but not on eIF4E-bound mRNAs. The CBC complex enhances NMD in mRNAs containing at least one exon-junction complex (EJC), promoting the interaction between upf1 and upf2. The CBC complex is also involved in 'failsafe' NMD, which is independent of the EJC complex, while it does not participate in Staufen-mediated mRNA decay (SMD). During cell proliferation, the CBC complex is also involved in microRNAs (miRNAs) biogenesis via its interaction with srrt/ars2, thereby being required for miRNA-mediated RNA interference. The CBC complex also acts as a negative regulator of parn, thereby acting as an inhibitor of mRNA deadenylation. In the CBC complex, ncbp2/cbp20 recognizes and binds capped RNAs (m7GpppG-capped RNA) but requires ncbp1/cbp80 to stabilize the movement of its N-terminal loop and lock the CBC into a high affinity cap-binding state with the cap structure. The conventional cap-binding complex with NCBP2 binds both small nuclear RNA (snRNA) and messenger (mRNA) and is involved in their export from the nucleus. This is Nuclear cap-binding protein subunit 2 (ncbp2) from Esox lucius (Northern pike).